The sequence spans 38 residues: Photosystem II reaction center protein L (38 aa).

The chain crosses the membrane as a helical span at residues 17–37; it reads SLFLGRLLIFVLGILFSSYIF.

The protein belongs to the PsbL family. As to quaternary structure, PSII is composed of 1 copy each of membrane proteins PsbA, PsbB, PsbC, PsbD, PsbE, PsbF, PsbH, PsbI, PsbJ, PsbK, PsbL, PsbM, PsbT, PsbX, PsbY, PsbZ, Psb30/Ycf12, peripheral proteins PsbO, CyanoQ (PsbQ), PsbU, PsbV and a large number of cofactors. It forms dimeric complexes.

It localises to the cellular thylakoid membrane. In terms of biological role, one of the components of the core complex of photosystem II (PSII). PSII is a light-driven water:plastoquinone oxidoreductase that uses light energy to abstract electrons from H(2)O, generating O(2) and a proton gradient subsequently used for ATP formation. It consists of a core antenna complex that captures photons, and an electron transfer chain that converts photonic excitation into a charge separation. This subunit is found at the monomer-monomer interface and is required for correct PSII assembly and/or dimerization. The protein is Photosystem II reaction center protein L of Prochlorothrix hollandica.